The following is a 484-amino-acid chain: MTTGVQTLKNYIGGQWVESRSAKTEAVPNPATGEVLAYVPISTREDLDRAVAAAKEAFKTWSKTPVPRRARILFKYQQLLVEHWEELARLVTLENGKSYNEAYGEIQRGIECVEFAAGAPTLMMGRQLPSIATGIESGMYRYPIGVVGGITPFNFPMMVPCWMFPLAIACGNTFVLKPSERTPMLANRLAELFKEAGLPDGVLNIVHGAHDVVNGLLEHPDVKAISFVGSQPVGEYVYKTAAAHGKRVQALTGAKNHSIVMPDADLKVAVREIINAAFGSAGERCMAASVVVAVGDIADELVERLVAAANEIKIGNGLEESVFLGPVIREAHKQRTVNYIELGEKEGAILVRDGRKDAAVQGEGYFIGPTIFDRVTTDMTIWKDEIFAPVLSIVRVSTLDEAIEVANKSPFANGACIYTRDGGNVRKFRDEIDAGMLGVNLGVPAPMAFFPFSGWKNSFYGDLHANGMDGVEFYTRKKMLTARW.

NAD(+)-binding residues include Phe153, Lys177, Glu180, Arg181, Ser230, and Thr252. Cys285 functions as the Nucleophile in the catalytic mechanism. Glu385 lines the NAD(+) pocket.

The protein belongs to the aldehyde dehydrogenase family. IolA subfamily. As to quaternary structure, homotetramer.

The enzyme catalyses 3-oxopropanoate + NAD(+) + CoA + H2O = hydrogencarbonate + acetyl-CoA + NADH + H(+). It catalyses the reaction 2-methyl-3-oxopropanoate + NAD(+) + CoA + H2O = propanoyl-CoA + hydrogencarbonate + NADH + H(+). Its pathway is polyol metabolism; myo-inositol degradation into acetyl-CoA; acetyl-CoA from myo-inositol: step 7/7. Functionally, catalyzes the oxidation of malonate semialdehyde (MSA) and methylmalonate semialdehyde (MMSA) into acetyl-CoA and propanoyl-CoA, respectively. Is involved in a myo-inositol catabolic pathway. Bicarbonate, and not CO2, is the end-product of the enzymatic reaction. This is Malonate-semialdehyde dehydrogenase 1 from Geobacillus thermodenitrificans (strain NG80-2).